We begin with the raw amino-acid sequence, 438 residues long: Glutaryl-CoA dehydrogenase, mitochondrial (438 aa).

A mitochondrion-targeting transit peptide spans 1 to 44 (MALRGVSVRLLSRGPGLHVLRTWVSSAAQTEKGGRTQSQLAKSS). Residues 138–139 (RS) and Ser186 contribute to the substrate site. Residues 177–186 (FGLTEPNSGS) and 212–214 (WIT) each bind FAD. At Lys240 the chain carries N6-acetyllysine. Position 287–294 (287–294 (FGCLNNAR)) interacts with substrate. FAD-binding positions include Arg319, Gln330, and 387-391 (DMLGG). Glu414 serves as the catalytic Proton acceptor. Residue Gly415 coordinates substrate. FAD contacts are provided by residues 416–418 (THD) and Phe434.

The protein belongs to the acyl-CoA dehydrogenase family. Homotetramer. FAD is required as a cofactor. In terms of tissue distribution, isoform Long and isoform Short are expressed in fibroblasts and liver.

The protein localises to the mitochondrion matrix. It catalyses the reaction glutaryl-CoA + oxidized [electron-transfer flavoprotein] + 2 H(+) = (2E)-butenoyl-CoA + reduced [electron-transfer flavoprotein] + CO2. The protein operates within amino-acid metabolism; lysine degradation. It functions in the pathway amino-acid metabolism; tryptophan metabolism. With respect to regulation, strongly inhibited by MCPA-CoA, a metabolite of hypoglycin which is present in unripened fruit of the ackee tree. Catalyzes the oxidative decarboxylation of glutaryl-CoA to crotonyl-CoA and CO(2) in the degradative pathway of L-lysine, L-hydroxylysine, and L-tryptophan metabolism. It uses electron transfer flavoprotein as its electron acceptor. Isoform Short is inactive. The sequence is that of Glutaryl-CoA dehydrogenase, mitochondrial (GCDH) from Homo sapiens (Human).